A 253-amino-acid chain; its full sequence is MRILLSNDDGVHAPGIQTLAKALREFADVQVVAPDRNRSGASNSLTLESSLRTFTFENGDIAVQMGTPTDCVYLGVNALMRPRPDIVVSGINAGPNLGDDVIYSGTVAAAMEGRHLGFPALAVSLDGHKHYDTAAAVTCSILRALCKEPLRTGRILNINVPDLPLDQIKGIRVTRCGTRHPADQVIPQQDPRGNTLYWIGPPGGKCDAGPGTDFAAVDEGYVSITPLHVDLTAHSAQDVVSDWLNSVGVGTQW.

A divalent metal cation contacts are provided by D8, D9, S39, and N92.

It belongs to the SurE nucleotidase family. It depends on a divalent metal cation as a cofactor.

The protein resides in the cytoplasm. The catalysed reaction is a ribonucleoside 5'-phosphate + H2O = a ribonucleoside + phosphate. It catalyses the reaction a ribonucleoside 3'-phosphate + H2O = a ribonucleoside + phosphate. It carries out the reaction [phosphate](n) + H2O = [phosphate](n-1) + phosphate + H(+). Nucleotidase with a broad substrate specificity as it can dephosphorylate various ribo- and deoxyribonucleoside 5'-monophosphates and ribonucleoside 3'-monophosphates with highest affinity to 3'-AMP. Also hydrolyzes polyphosphate (exopolyphosphatase activity) with the preference for short-chain-length substrates (P20-25). Might be involved in the regulation of dNTP and NTP pools, and in the turnover of 3'-mononucleotides produced by numerous intracellular RNases (T1, T2, and F) during the degradation of various RNAs. In Shigella boydii serotype 18 (strain CDC 3083-94 / BS512), this protein is 5'/3'-nucleotidase SurE.